The chain runs to 270 residues: Putative pyruvate, phosphate dikinase regulatory protein (270 aa).

Residue 148 to 155 (GISRTSKT) coordinates ADP.

The protein belongs to the pyruvate, phosphate/water dikinase regulatory protein family. PDRP subfamily.

It carries out the reaction N(tele)-phospho-L-histidyl/L-threonyl-[pyruvate, phosphate dikinase] + ADP = N(tele)-phospho-L-histidyl/O-phospho-L-threonyl-[pyruvate, phosphate dikinase] + AMP + H(+). The catalysed reaction is N(tele)-phospho-L-histidyl/O-phospho-L-threonyl-[pyruvate, phosphate dikinase] + phosphate + H(+) = N(tele)-phospho-L-histidyl/L-threonyl-[pyruvate, phosphate dikinase] + diphosphate. Functionally, bifunctional serine/threonine kinase and phosphorylase involved in the regulation of the pyruvate, phosphate dikinase (PPDK) by catalyzing its phosphorylation/dephosphorylation. This chain is Putative pyruvate, phosphate dikinase regulatory protein, found in Bacillus mycoides (strain KBAB4) (Bacillus weihenstephanensis).